Reading from the N-terminus, the 393-residue chain is 8-amino-7-oxononanoate synthase (393 aa).

Arg18 serves as a coordination point for substrate. 105-106 (GY) contacts pyridoxal 5'-phosphate. His130 lines the substrate pocket. Pyridoxal 5'-phosphate contacts are provided by Ser178, His206, and Thr234. Residue Lys237 is modified to N6-(pyridoxal phosphate)lysine. Thr353 is a binding site for substrate.

Belongs to the class-II pyridoxal-phosphate-dependent aminotransferase family. BioF subfamily. Homodimer. Requires pyridoxal 5'-phosphate as cofactor.

The enzyme catalyses 6-carboxyhexanoyl-[ACP] + L-alanine + H(+) = (8S)-8-amino-7-oxononanoate + holo-[ACP] + CO2. It participates in cofactor biosynthesis; biotin biosynthesis. In terms of biological role, catalyzes the decarboxylative condensation of pimeloyl-[acyl-carrier protein] and L-alanine to produce 8-amino-7-oxononanoate (AON), [acyl-carrier protein], and carbon dioxide. In Geotalea daltonii (strain DSM 22248 / JCM 15807 / FRC-32) (Geobacter daltonii), this protein is 8-amino-7-oxononanoate synthase.